A 95-amino-acid chain; its full sequence is MRKYEMMVIARPDLDEAGLQALSDKIAELITSNGGTVESQDAWKKQRLAYEIKHLREGFYSVFNFTGEPRTANELNRVLKITDEVVRFLIVRPAE.

The protein belongs to the bacterial ribosomal protein bS6 family.

Functionally, binds together with bS18 to 16S ribosomal RNA. This Symbiobacterium thermophilum (strain DSM 24528 / JCM 14929 / IAM 14863 / T) protein is Small ribosomal subunit protein bS6.